A 379-amino-acid polypeptide reads, in one-letter code: Deoxyhypusine synthase (379 aa).

Residues 108–112 (SNLIS), 134–136 (TAG), E140, and D257 contribute to the NAD(+) site. Residue 139–140 (EE) coordinates spermidine. Residue D262 participates in spermidine binding. G304 is an NAD(+) binding site. Residue H309 participates in spermidine binding. Position 329 to 330 (329 to 330 (TG)) interacts with NAD(+). Spermidine is bound by residues 335–337 (GSD) and 344–350 (EAVSWGK). K350 serves as the catalytic Nucleophile. 363–364 (DA) provides a ligand contact to NAD(+).

It belongs to the deoxyhypusine synthase family. NAD(+) is required as a cofactor.

The enzyme catalyses [eIF5A protein]-L-lysine + spermidine = [eIF5A protein]-deoxyhypusine + propane-1,3-diamine. It functions in the pathway protein modification; eIF5A hypusination. Its function is as follows. Catalyzes the NAD-dependent oxidative cleavage of spermidine and the subsequent transfer of the butylamine moiety of spermidine to the epsilon-amino group of a specific lysine residue of the eIF-5A precursor protein to form the intermediate deoxyhypusine residue. The sequence is that of Deoxyhypusine synthase (DYS1) from Kluyveromyces lactis (strain ATCC 8585 / CBS 2359 / DSM 70799 / NBRC 1267 / NRRL Y-1140 / WM37) (Yeast).